The primary structure comprises 320 residues: Short-chain dehydrogenase/reductase ARMGADRAFT_1169971 (320 aa).

A helical membrane pass occupies residues 19–39 (KVAVVTGANSGIGLYILFHVA). NADP(+) contacts are provided by Ile-30, Asp-78, Asn-105, and Lys-136. Asn-157 carries N-linked (GlcNAc...) asparagine glycosylation. The active-site Proton donor is Ser-159. NADP(+) is bound by residues Tyr-192, Lys-196, Val-227, and Ser-229. Catalysis depends on Tyr-192, which acts as the Proton acceptor. Lys-196 functions as the Lowers pKa of active site Tyr in the catalytic mechanism. Residues 235 to 255 (LFTSLMFGTIINWVFSLFFIS) traverse the membrane as a helical segment.

This sequence belongs to the short-chain dehydrogenases/reductases (SDR) family.

It is found in the membrane. Its pathway is secondary metabolite biosynthesis. Its function is as follows. Short-chain dehydrogenase/reductase, part of the gene cluster that mediates the biosynthesis of melleolides, a range of antifungal and phytotoxic polyketide derivatives composed of an orsellinic acid (OA) moiety esterified to various sesquiterpene alcohols. The first step in melleolides biosynthesis is performed by the delta(6)-protoilludene synthase PRO1 which catalyzes the cyclization of farnesyl diphosphate to protoilludene. The orsellinic acid synthase armB produces OA by condensing acetyl-CoA with 3 malonyl-CoA units in a three-round chain elongation reaction folowed by a C2-C7 ring closure. ArmB further catalyzes the trans-esterification of OA to the various sesquiterpene alcohols resulting from the hydroxylation of protoilludene. The melleolides cluster also includes 5 cytochrome P450 monooxygenases, 4 NAD(+)-dependent oxidoreductases, one flavin-dependent oxidoreductase, and one O-methyltransferase. The cytochrome P450 monooxygenases may be involved in protoilludene hydroxylation to elaborate melleolides with multiple alcohol groups, such as melleolide D, which carries alcohol functionalities at C-4, C-5, C-10, and C-13. The role of the NAD(+)-dependent enzymes remains unknown. Numerous melleolides, including arnamial, show 5'-O-methylation of the aromatic moiety which may be catalyzed by the methyltransferase encoded in the cluster. The flavin-dependent oxidoreductase might represent the dehydrogenase yielding the aldehyde in position 1 of arnamial and other melleolides. Finally, several halogenase localized outside of the cluster, are able to catalyze the transfer of a single chlorine atom to the melleolide backbone, resulting in a 6'-chloromelleolide product. The polypeptide is Short-chain dehydrogenase/reductase ARMGADRAFT_1169971 (Armillaria gallica (Bulbous honey fungus)).